Consider the following 309-residue polypeptide: Glutaminase (309 aa).

Residues Ser-64, Asn-114, Glu-160, Asn-167, Tyr-191, Tyr-243, and Val-261 each contribute to the substrate site.

The protein belongs to the glutaminase family. Homotetramer.

It carries out the reaction L-glutamine + H2O = L-glutamate + NH4(+). The chain is Glutaminase from Methylorubrum extorquens (strain PA1) (Methylobacterium extorquens).